Consider the following 329-residue polypeptide: Isopenicillin N synthase (329 aa).

4 residues coordinate isopenicillin N: R87, Y91, S183, and Y189. Positions 87, 91, 183, 189, 212, and 214 each coordinate N-[(5S)-5-amino-5-carboxypentanoyl]-L-cysteinyl-D-valine. The 107-residue stretch at 180–286 (SLSSVSLIRY…RLSLPFFLNG (107 aa)) folds into the Fe2OG dioxygenase domain. H212, D214, and H268 together coordinate Fe(2+). R277 lines the 2-oxoglutarate pocket. S279 is an isopenicillin N binding site. N-[(5S)-5-amino-5-carboxypentanoyl]-L-cysteinyl-D-valine is bound at residue S279.

It belongs to the iron/ascorbate-dependent oxidoreductase family. Requires Fe cation as cofactor. L-ascorbate serves as cofactor.

It catalyses the reaction N-[(5S)-5-amino-5-carboxypentanoyl]-L-cysteinyl-D-valine + O2 = isopenicillin N + 2 H2O. It participates in antibiotic biosynthesis; penicillin G biosynthesis; penicillin G from L-alpha-aminoadipate and L-cysteine and L-valine: step 2/3. Functionally, removes, in the presence of oxygen, 4 hydrogen atoms from delta-L-(alpha-aminoadipyl)-L-cysteinyl-D-valine (ACV) to form the azetidinone and thiazolidine rings of isopenicillin. The chain is Isopenicillin N synthase (pcbC) from Streptomyces clavuligerus.